A 309-amino-acid chain; its full sequence is Maintenance of mitochondrial morphology protein 1 (309 aa).

Residues 1 to 16 lie on the Lumenal side of the membrane; sequence MGNAYIFSLQPTFTQG. The helical transmembrane segment at 17 to 37 threads the bilayer; it reads LILGQFSILFLLVLVLKYLFF. Residues 38 to 309 lie on the Cytoplasmic side of the membrane; that stretch reads DTVSDHAYRT…EQQAGELPVN (272 aa). Residues 84 to 293 form the SMP-LTD domain; it reads ECESADWLNA…LPGLASVSEV (210 aa).

It belongs to the MMM1 family. Homodimer. Component of the ER-mitochondria encounter structure (ERMES) or MDM complex, composed of MMM1, MDM10, MDM12 and MDM34. An MMM1 homodimer associates with one molecule of MDM12 on each side in a pairwise head-to-tail manner, and the SMP-LTD domains of MMM1 and MDM12 generate a continuous hydrophobic tunnel for phospholipid trafficking.

It localises to the endoplasmic reticulum membrane. In terms of biological role, component of the ERMES/MDM complex, which serves as a molecular tether to connect the endoplasmic reticulum (ER) and mitochondria. Components of this complex are involved in the control of mitochondrial shape and protein biogenesis, and function in nonvesicular lipid trafficking between the ER and mitochondria. The MDM12-MMM1 subcomplex functions in the major beta-barrel assembly pathway that is responsible for biogenesis of all outer membrane beta-barrel proteins, and acts in a late step after the SAM complex. The MDM10-MDM12-MMM1 subcomplex further acts in the TOM40-specific pathway after the action of the MDM12-MMM1 complex. Essential for establishing and maintaining the structure of mitochondria and maintenance of mtDNA nucleoids. This is Maintenance of mitochondrial morphology protein 1 from Postia placenta (strain ATCC 44394 / Madison 698-R) (Brown rot fungus).